We begin with the raw amino-acid sequence, 684 residues long: MSLSKRELDELKPWIEKTVKRVLGFSEPTVVTAALNCVGKGMDKKKAADHLKPFLDDSTLRFVDKLFEAVEEGRSSRHSKSNSDRNRKRELKDVFGDDSEVSKESSGVKKRRIPRFEEVEDEPEVIPGPPSESPGMLTKLQIKQMMEAATRQIEERKKQLSFISPPTPQPKISSSSQSERLPIGNTVQPSQAATFMNDAIEKARKAAELQARIQAQLALKPGLIGNANMVGLANLHAMGIAPPKVELKDQTKPTPLILDEQGRTVDATGKEIELTHRMPTLKANIRAVKREQFKQQLKEKPSEDMESNTYFDLRVSITPAQRQKRTFKFHEKGKFEKIAQRLRTKAQLKKLQAEISQAARKTGIHTSTKLALITPKKELKEGEIPEIEWWDSYIIPNGLDLKGGTSSKKDEYFGITNLVEHPAQLNPPVDSDTPVTLGVYLTKKEQKKLRRQTRREAQKELQEKVRLGLMPPPEPKVRISNLMRVLGTEAVQDPTKVEAHVRAQMAKRQKAHEEANAARKLTAEQRKAKKIKKLKEDVSQGVHIAVYRVRNLSNPAKKFKIEANAGQLYLTGVVVLHKDVNVVVVEGGPKAQKKFKRLMLHRIKWDEQTSNTKGEDDDESDEESVKKTNKCSLVWEGTAKDRSFGEMKFKQCPTENMAREHFKKHGAEHYWDLALSESVLESTD.

The region spanning 1 to 87 is the PWI domain; that stretch reads MSLSKRELDE…HSKSNSDRNR (87 aa). Basic and acidic residues predominate over residues 73–107; sequence GRSSRHSKSNSDRNRKRELKDVFGDDSEVSKESSG. Disordered stretches follow at residues 73–109 and 162–183; these read GRSS…SGVK and FISP…RLPI. Polar residues predominate over residues 170–183; it reads PKISSSSQSERLPI.

As to quaternary structure, component of the precatalytic spliceosome (spliceosome B complex). Component of the U4/U6-U5 tri-snRNP complex, a building block of the precatalytic spliceosome (spliceosome B complex). The U4/U6-U5 tri-snRNP complex is composed of the U4, U6 and U5 snRNAs and at least PRPF3, PRPF4, PRPF6, PRPF8, PRPF31, SNRNP200, TXNL4A, SNRNP40, SNRPB, SNRPD1, SNRPD2, SNRPD3, SNRPE, SNRPF, SNRPG, DDX23, CD2BP2, PPIH, SNU13, EFTUD2, SART1 and USP39, plus LSM2, LSM3, LSM4, LSM5, LSM6, LSM7 and LSM8.

The protein resides in the nucleus. Its subcellular location is the nucleus speckle. In terms of biological role, plays a role in pre-mRNA splicing as component of the U4/U6-U5 tri-snRNP complex that is involved in spliceosome assembly, and as component of the precatalytic spliceosome (spliceosome B complex). The polypeptide is U4/U6 small nuclear ribonucleoprotein Prp3 (PRPF3) (Gallus gallus (Chicken)).